The following is a 261-amino-acid chain: DNA repair protein RecO (261 aa).

Belongs to the RecO family.

Functionally, involved in DNA repair and RecF pathway recombination. The protein is DNA repair protein RecO of Chlorobium phaeobacteroides (strain BS1).